Reading from the N-terminus, the 63-residue chain is Lantibiotic mutacin-1140 (63 aa).

Residues 1 to 41 (MSNTQLLEVLGTETFDVQEDLFAFDTTDTTIVASNDDPDTR) constitute a propeptide that is removed on maturation. The lanthionine (Ser-Cys) cross-link spans 44–48 (SWSLC). Serine 46 carries the 2,3-didehydroalanine (Ser) modification. The beta-methyllanthionine (Thr-Cys) cross-link spans 49 to 52 (TPGC). Threonine 55 bears the 2,3-didehydrobutyrine mark. Positions 57–62 (SFNSYC) form a cross-link, lanthionine (Ser-Cys). Positions 60–63 (SYCC) form a cross-link, S-(2-aminovinyl)-D-cysteine (Ser-Cys).

This sequence belongs to the type A lantibiotic family. Maturation of lantibiotics involves the enzymatic conversion of Thr, and Ser into dehydrated AA and the formation of thioether bonds with cysteine. The C-terminal lanthionine undergoes decarboxylation. This is followed by membrane translocation and cleavage of the modified precursor. In terms of processing, the structure of the 2,3-didehydrobutyrine is not discussed in PubMed:11082191.

Functionally, lanthionine-containing peptide antibiotic (lantibiotic) active on Gram-positive bacteria. The bactericidal activity of lantibiotics is based on depolarization of energized bacterial cytoplasmic membranes, initiated by the formation of aqueous transmembrane pores. This chain is Lantibiotic mutacin-1140 (lanA), found in Streptococcus mutans.